A 29-amino-acid polypeptide reads, in one-letter code: TPEHQRYIELFLVVDSGMFMKYNGNSDKI.

Positions 6-29 constitute a Peptidase M12B domain; the sequence is RYIELFLVVDSGMFMKYNGNSDKI. Position 9 (Glu9) interacts with Ca(2+).

The protein belongs to the venom metalloproteinase (M12B) family. It depends on Zn(2+) as a cofactor. Expressed by the venom gland.

The protein localises to the secreted. It carries out the reaction Cleavage of 4-Gln-|-His-5, 9-Ser-|-His-10 and 14-Ala-|-Leu-15 of insulin B chain and Pro-|-Phe of angiotensin I.. In terms of biological role, snake venom zinc metalloproteinase that impairs hemostasis in the envenomed animal. This is Snake venom metalloproteinase bothrolysin from Bothrops jararaca (Jararaca).